We begin with the raw amino-acid sequence, 443 residues long: Probable D-serine dehydratase (443 aa).

N6-(pyridoxal phosphate)lysine is present on K116.

Belongs to the serine/threonine dehydratase family. DsdA subfamily. Requires pyridoxal 5'-phosphate as cofactor.

It carries out the reaction D-serine = pyruvate + NH4(+). This is Probable D-serine dehydratase from Bacillus cereus (strain B4264).